The primary structure comprises 200 residues: Small ribosomal subunit protein uS4 (200 aa).

Residues arginine 106–isoleucine 170 form the S4 RNA-binding domain. The disordered stretch occupies residues alanine 178–glutamate 200. A compositionally biased stretch (basic and acidic residues) spans glutamate 179–alanine 190.

It belongs to the universal ribosomal protein uS4 family. As to quaternary structure, part of the 30S ribosomal subunit. Contacts protein S5. The interaction surface between S4 and S5 is involved in control of translational fidelity.

One of the primary rRNA binding proteins, it binds directly to 16S rRNA where it nucleates assembly of the body of the 30S subunit. Functionally, with S5 and S12 plays an important role in translational accuracy. In Thermoplasma volcanium (strain ATCC 51530 / DSM 4299 / JCM 9571 / NBRC 15438 / GSS1), this protein is Small ribosomal subunit protein uS4.